A 133-amino-acid chain; its full sequence is ATP synthase epsilon chain (133 aa).

The protein belongs to the ATPase epsilon chain family. As to quaternary structure, F-type ATPases have 2 components, CF(1) - the catalytic core - and CF(0) - the membrane proton channel. CF(1) has five subunits: alpha(3), beta(3), gamma(1), delta(1), epsilon(1). CF(0) has three main subunits: a, b and c.

The protein resides in the cell membrane. Its function is as follows. Produces ATP from ADP in the presence of a proton gradient across the membrane. This is ATP synthase epsilon chain from Halalkalibacterium halodurans (strain ATCC BAA-125 / DSM 18197 / FERM 7344 / JCM 9153 / C-125) (Bacillus halodurans).